Here is a 233-residue protein sequence, read N- to C-terminus: RNA-free ribonuclease P (233 aa).

Belongs to the HARP family.

It catalyses the reaction Endonucleolytic cleavage of RNA, removing 5'-extranucleotides from tRNA precursor.. RNA-free RNase P that catalyzes the removal of the 5'-leader sequence from pre-tRNA to produce the mature 5'-terminus. The sequence is that of RNA-free ribonuclease P from Methanocaldococcus jannaschii (strain ATCC 43067 / DSM 2661 / JAL-1 / JCM 10045 / NBRC 100440) (Methanococcus jannaschii).